The chain runs to 436 residues: Hydroxycinnamoyltransferase (436 aa).

Active-site proton acceptor residues include histidine 154 and aspartate 383.

This sequence belongs to the plant acyltransferase family. As to expression, mostly expressed in stems, and, to a lower extent, in bulbs.

Its pathway is phenylpropanoid metabolism. In terms of biological role, hydroxycinnamoyl transferase that catalyzes the transfer of an acyl from p-coumaryol-CoA to various acyl acceptors. Can use feruloyl-CoA and caffeoyl-CoA as acyl donors. This is Hydroxycinnamoyltransferase from Narcissus pseudonarcissus (Daffodil).